The primary structure comprises 461 residues: ATP synthase subunit beta 2 (461 aa).

151–158 (GGAGVGKT) is an ATP binding site.

Belongs to the ATPase alpha/beta chains family. In terms of assembly, F-type ATPases have 2 components, CF(1) - the catalytic core - and CF(0) - the membrane proton channel. CF(1) has five subunits: alpha(3), beta(3), gamma(1), delta(1), epsilon(1). CF(0) has three main subunits: a(1), b(2) and c(9-12). The alpha and beta chains form an alternating ring which encloses part of the gamma chain. CF(1) is attached to CF(0) by a central stalk formed by the gamma and epsilon chains, while a peripheral stalk is formed by the delta and b chains.

It localises to the cell inner membrane. It catalyses the reaction ATP + H2O + 4 H(+)(in) = ADP + phosphate + 5 H(+)(out). Its function is as follows. Produces ATP from ADP in the presence of a proton gradient across the membrane. The catalytic sites are hosted primarily by the beta subunits. This chain is ATP synthase subunit beta 2, found in Pseudoalteromonas atlantica (strain T6c / ATCC BAA-1087).